The chain runs to 311 residues: 4-hydroxy-tetrahydrodipicolinate synthase (311 aa).

T49 contributes to the pyruvate binding site. The active-site Proton donor/acceptor is Y138. The active-site Schiff-base intermediate with substrate is K166. I207 serves as a coordination point for pyruvate.

Belongs to the DapA family. As to quaternary structure, homotetramer; dimer of dimers.

The protein localises to the cytoplasm. It catalyses the reaction L-aspartate 4-semialdehyde + pyruvate = (2S,4S)-4-hydroxy-2,3,4,5-tetrahydrodipicolinate + H2O + H(+). It functions in the pathway amino-acid biosynthesis; L-lysine biosynthesis via DAP pathway; (S)-tetrahydrodipicolinate from L-aspartate: step 3/4. Catalyzes the condensation of (S)-aspartate-beta-semialdehyde [(S)-ASA] and pyruvate to 4-hydroxy-tetrahydrodipicolinate (HTPA). The chain is 4-hydroxy-tetrahydrodipicolinate synthase from Lactobacillus acidophilus (strain ATCC 700396 / NCK56 / N2 / NCFM).